The chain runs to 252 residues: Probable transcriptional regulatory protein Moth_1704 (252 aa).

It belongs to the TACO1 family.

The protein localises to the cytoplasm. In Moorella thermoacetica (strain ATCC 39073 / JCM 9320), this protein is Probable transcriptional regulatory protein Moth_1704.